The sequence spans 274 residues: ATP synthase subunit delta (274 aa).

Belongs to the ATPase delta chain family. As to quaternary structure, F-type ATPases have 2 components, F(1) - the catalytic core - and F(0) - the membrane proton channel. F(1) has five subunits: alpha(3), beta(3), gamma(1), delta(1), epsilon(1). F(0) has three main subunits: a(1), b(2) and c(10-14). The alpha and beta chains form an alternating ring which encloses part of the gamma chain. F(1) is attached to F(0) by a central stalk formed by the gamma and epsilon chains, while a peripheral stalk is formed by the delta and b chains.

The protein localises to the cell membrane. Its function is as follows. F(1)F(0) ATP synthase produces ATP from ADP in the presence of a proton or sodium gradient. F-type ATPases consist of two structural domains, F(1) containing the extramembraneous catalytic core and F(0) containing the membrane proton channel, linked together by a central stalk and a peripheral stalk. During catalysis, ATP synthesis in the catalytic domain of F(1) is coupled via a rotary mechanism of the central stalk subunits to proton translocation. In terms of biological role, this protein is part of the stalk that links CF(0) to CF(1). It either transmits conformational changes from CF(0) to CF(1) or is implicated in proton conduction. The sequence is that of ATP synthase subunit delta from Salinispora arenicola (strain CNS-205).